The following is a 337-amino-acid chain: tRNA N6-adenosine threonylcarbamoyltransferase (337 aa).

Fe cation-binding residues include His-110 and His-114. Residues 133 to 137 (MVSGG), Asp-166, Gly-179, Asp-183, and Asn-276 each bind substrate. Asp-302 is a binding site for Fe cation.

It belongs to the KAE1 / TsaD family. It depends on Fe(2+) as a cofactor.

The protein localises to the cytoplasm. It catalyses the reaction L-threonylcarbamoyladenylate + adenosine(37) in tRNA = N(6)-L-threonylcarbamoyladenosine(37) in tRNA + AMP + H(+). In terms of biological role, required for the formation of a threonylcarbamoyl group on adenosine at position 37 (t(6)A37) in tRNAs that read codons beginning with adenine. Is involved in the transfer of the threonylcarbamoyl moiety of threonylcarbamoyl-AMP (TC-AMP) to the N6 group of A37, together with TsaE and TsaB. TsaD likely plays a direct catalytic role in this reaction. The sequence is that of tRNA N6-adenosine threonylcarbamoyltransferase from Fervidobacterium nodosum (strain ATCC 35602 / DSM 5306 / Rt17-B1).